Consider the following 482-residue polypeptide: Lipoamide acyltransferase component of branched-chain alpha-keto acid dehydrogenase complex, mitochondrial (482 aa).

Residues 1-61 constitute a mitochondrion transit peptide; the sequence is MAAVRMLRTW…HFLKTTAALR (61 aa). The 76-residue stretch at 64 to 139 folds into the Lipoyl-binding domain; sequence VVQFKLSDIG…YVGKPLVDIE (76 aa). Position 105 is an N6-lipoyllysine (Lys105). N6-succinyllysine is present on Lys133. The tract at residues 145 to 160 is critical for association with PPM1K; the sequence is DSEEDVVETPAVSHDE. Residues 147–168 are disordered; it reads EEDVVETPAVSHDEHTHQEIKG. Basic and acidic residues predominate over residues 157-168; it reads SHDEHTHQEIKG. One can recognise a Peripheral subunit-binding (PSBD) domain in the interval 172–209; that stretch reads LATPAVRRLAMENNIKLSEVVGSGKDGRILKEDILNYL. The residue at position 196 (Lys196) is an N6-acetyllysine; alternate. Position 196 is an N6-succinyllysine; alternate (Lys196). The residue at position 202 (Lys202) is an N6-acetyllysine. Ser220 bears the Phosphoserine mark. 2 positions are modified to N6-acetyllysine: Lys243 and Lys250. Lys261 is subject to N6-succinyllysine. Lys289 carries the post-translational modification N6-acetyllysine; alternate. Lys289 bears the N6-succinyllysine; alternate mark. Residue Arg291 coordinates CoA. Residues Lys295 and Lys304 each carry the N6-acetyllysine modification. Positions 306, 349, 378, 399, 400, 403, 424, and 426 each coordinate CoA. The residue at position 435 (Lys435) is an N6-acetyllysine. Lys440 is subject to N6-acetyllysine; alternate. At Lys440 the chain carries N6-succinyllysine; alternate. Catalysis depends on residues His452 and Asp456.

It belongs to the 2-oxoacid dehydrogenase family. Forms a 24-polypeptide structural core with octahedral symmetry that represents the E2 component of the branched-chain alpha-ketoacid dehydrogenase (BCKDH) complex. The BCKDH complex is composed of three major building blocks E1, E2 and E3. It is organized around E2, a 24-meric cubic core composed of DBT, to which are associated 6 to 12 copies of E1, and approximately 6 copies of the dehydrogenase E3, a DLD dimer. Interacts with PPM1K with a 24:1 stoichiometry; the N-terminal region (residues 49-61) of PPM1K and C-terminal linker of the lipoyl domain of DBT/E2 (residues 145-160) are critical for this interaction whereas the lipoyl prosthetic group is dispensable. This interaction requires colocalization in mitochondria. PPM1K competes with BCKDK for binding to DBT; this interaction is modulated by branched-chain alpha-keto acids (BCKAs). At steady state, BCKDH holoenzyme preferentially binds BCKDK and BCKDHA is phosphorylated. In response to high levels of BCKAs, BCKDK is replaced by PPM1K leading to BCKDHA dephosphorylation. (R)-lipoate serves as cofactor.

It localises to the mitochondrion matrix. The catalysed reaction is N(6)-[(R)-dihydrolipoyl]-L-lysyl-[protein] + 2-methylpropanoyl-CoA = N(6)-[(R)-S(8)-2-methylpropanoyldihydrolipoyl]-L-lysyl-[protein] + CoA. In terms of biological role, the branched-chain alpha-keto dehydrogenase complex catalyzes the overall conversion of alpha-keto acids to acyl-CoA and CO(2). It contains multiple copies of three enzymatic components: branched-chain alpha-keto acid decarboxylase (E1), lipoamide acyltransferase (E2) and lipoamide dehydrogenase (E3). Within this complex, the catalytic function of this enzyme is to accept, and to transfer to coenzyme A, acyl groups that are generated by the branched-chain alpha-keto acid decarboxylase component. This chain is Lipoamide acyltransferase component of branched-chain alpha-keto acid dehydrogenase complex, mitochondrial, found in Homo sapiens (Human).